Reading from the N-terminus, the 294-residue chain is MTKAVLTSISQLALKALLYEVSLSPKPGLVDRFDNGAHDDMSFMTFIDSMIALSPFFQAYIETGFAYAKEEPLLLFNRLRQLGQKAEETMFCATQGINTHKGLNFSMALLLGATGAYLARTPHLMTDLGCFSKEDTLAICRLVKPMTAHLIQTDLGHLNTKKEFTYGEQLFVTYGIKGPRGEASEGFTTLTDHALPYFRQMISQNDPETSQLRLLVYLMSIVEDGNLIHRGGIEAWKGVKADMRLLLQQDLSTTDLRLALSSYNQCLINQHLSPGGAADLLALTFYFAFLEKLL.

Belongs to the CitG/MdcB family.

It catalyses the reaction 3'-dephospho-CoA + ATP = 2'-(5''-triphospho-alpha-D-ribosyl)-3'-dephospho-CoA + adenine. In Streptococcus pyogenes serotype M28 (strain MGAS6180), this protein is Probable 2-(5''-triphosphoribosyl)-3'-dephosphocoenzyme-A synthase.